The sequence spans 165 residues: Aspartate carbamoyltransferase regulatory chain (165 aa).

Zn(2+)-binding residues include Cys-121, Cys-126, Cys-149, and Cys-152.

Belongs to the PyrI family. Contains catalytic and regulatory chains. The cofactor is Zn(2+).

In terms of biological role, involved in allosteric regulation of aspartate carbamoyltransferase. This Methanoregula boonei (strain DSM 21154 / JCM 14090 / 6A8) protein is Aspartate carbamoyltransferase regulatory chain.